We begin with the raw amino-acid sequence, 85 residues long: Toxin AahP1005 (85 aa).

A signal peptide spans 1–19 (MNYLVMISLALLFMTGVES). The 63-residue stretch at 21 to 83 (KDGYIVDDKN…VSTKKKGGCN (63 aa)) folds into the LCN-type CS-alpha/beta domain. Cystine bridges form between C31–C82, C35–C55, C41–C65, and C45–C67. N83 is modified (asparagine amide).

This sequence belongs to the long (4 C-C) scorpion toxin superfamily. Sodium channel inhibitor family. Alpha subfamily. As to expression, expressed by the venom gland.

It localises to the secreted. Functionally, alpha toxins bind voltage-independently at site-3 of sodium channels (Nav) and inhibit the inactivation of the activated channels, thereby blocking neuronal transmission. This Androctonus australis (Sahara scorpion) protein is Toxin AahP1005.